A 156-amino-acid chain; its full sequence is Small ribosomal subunit protein uS7 (156 aa).

This sequence belongs to the universal ribosomal protein uS7 family. Part of the 30S ribosomal subunit. Contacts proteins S9 and S11.

In terms of biological role, one of the primary rRNA binding proteins, it binds directly to 16S rRNA where it nucleates assembly of the head domain of the 30S subunit. Is located at the subunit interface close to the decoding center, probably blocks exit of the E-site tRNA. This is Small ribosomal subunit protein uS7 from Alkalilimnicola ehrlichii (strain ATCC BAA-1101 / DSM 17681 / MLHE-1).